We begin with the raw amino-acid sequence, 476 residues long: ATP synthase subunit beta (476 aa).

154–161 (GGAGVGKT) contacts ATP.

This sequence belongs to the ATPase alpha/beta chains family. In terms of assembly, F-type ATPases have 2 components, CF(1) - the catalytic core - and CF(0) - the membrane proton channel. CF(1) has five subunits: alpha(3), beta(3), gamma(1), delta(1), epsilon(1). CF(0) has four main subunits: a(1), b(1), b'(1) and c(9-12).

The protein resides in the cell inner membrane. The catalysed reaction is ATP + H2O + 4 H(+)(in) = ADP + phosphate + 5 H(+)(out). Its function is as follows. Produces ATP from ADP in the presence of a proton gradient across the membrane. The catalytic sites are hosted primarily by the beta subunits. The sequence is that of ATP synthase subunit beta from Rhodopseudomonas palustris (strain ATCC BAA-98 / CGA009).